The primary structure comprises 97 residues: Homeobox protein HD-9 (97 aa).

The homeobox DNA-binding region spans 6 to 65 (MPAKKSRLSKAQRDFLDTYFEVNPHPNTQERAYIASQSLVSEEKIRNWFQNRRTRERGDC).

It is found in the nucleus. The sequence is that of Homeobox protein HD-9 (HD-9) from Encephalitozoon cuniculi (strain GB-M1) (Microsporidian parasite).